The sequence spans 99 residues: Mu-hexatoxin-Mg1c (99 aa).

3 disulfide bridges follow: Cys61-Cys75, Cys68-Cys80, and Cys74-Cys94.

The protein belongs to the neurotoxin 14 (magi-1) family. 09 (magi-1) subfamily. As to expression, expressed by the venom gland.

It localises to the secreted. Its function is as follows. Inhibits voltage-gated sodium channels by binding to site 3. Insecticidal neurotoxin. This chain is Mu-hexatoxin-Mg1c, found in Macrothele gigas (Japanese funnel web spider).